A 148-amino-acid chain; its full sequence is Large ribosomal subunit protein uL15 (148 aa).

The tract at residues 1 to 57 is disordered; sequence MRLHDLYPFPEERKTRKRVGRGSGSGLGCTSGKGNKGQNARAGGGVRPGFEGGQMPL. 2 stretches are compositionally biased toward gly residues: residues 21–35 and 42–52; these read RGSGSGLGCTSGKGN and AGGGVRPGFEG.

This sequence belongs to the universal ribosomal protein uL15 family. In terms of assembly, part of the 50S ribosomal subunit.

Functionally, binds to the 23S rRNA. The polypeptide is Large ribosomal subunit protein uL15 (Nitratidesulfovibrio vulgaris (strain ATCC 29579 / DSM 644 / CCUG 34227 / NCIMB 8303 / VKM B-1760 / Hildenborough) (Desulfovibrio vulgaris)).